The primary structure comprises 115 residues: NAD(P)H-quinone oxidoreductase subunit M (115 aa).

Belongs to the complex I NdhM subunit family. NDH-1 can be composed of about 15 different subunits; different subcomplexes with different compositions have been identified which probably have different functions.

The protein localises to the cellular thylakoid membrane. It catalyses the reaction a plastoquinone + NADH + (n+1) H(+)(in) = a plastoquinol + NAD(+) + n H(+)(out). The catalysed reaction is a plastoquinone + NADPH + (n+1) H(+)(in) = a plastoquinol + NADP(+) + n H(+)(out). Functionally, NDH-1 shuttles electrons from an unknown electron donor, via FMN and iron-sulfur (Fe-S) centers, to quinones in the respiratory and/or the photosynthetic chain. The immediate electron acceptor for the enzyme in this species is believed to be plastoquinone. Couples the redox reaction to proton translocation, and thus conserves the redox energy in a proton gradient. Cyanobacterial NDH-1 also plays a role in inorganic carbon-concentration. The polypeptide is NAD(P)H-quinone oxidoreductase subunit M (Synechococcus sp. (strain WH7803)).